The following is a 233-amino-acid chain: 7-cyano-7-deazaguanine synthase (233 aa).

7-17 (CSGGLDSVSLA) is an ATP binding site. Cysteine 185, cysteine 193, cysteine 196, and cysteine 199 together coordinate Zn(2+).

Belongs to the QueC family. Zn(2+) serves as cofactor.

It catalyses the reaction 7-carboxy-7-deazaguanine + NH4(+) + ATP = 7-cyano-7-deazaguanine + ADP + phosphate + H2O + H(+). The protein operates within purine metabolism; 7-cyano-7-deazaguanine biosynthesis. Its function is as follows. Catalyzes the ATP-dependent conversion of 7-carboxy-7-deazaguanine (CDG) to 7-cyano-7-deazaguanine (preQ(0)). The protein is 7-cyano-7-deazaguanine synthase of Paracoccus denitrificans (strain Pd 1222).